The chain runs to 141 residues: Large ribosomal subunit protein uL11 (141 aa).

Belongs to the universal ribosomal protein uL11 family. Part of the ribosomal stalk of the 50S ribosomal subunit. Interacts with L10 and the large rRNA to form the base of the stalk. L10 forms an elongated spine to which L12 dimers bind in a sequential fashion forming a multimeric L10(L12)X complex. In terms of processing, one or more lysine residues are methylated.

Forms part of the ribosomal stalk which helps the ribosome interact with GTP-bound translation factors. In Streptococcus suis (strain 05ZYH33), this protein is Large ribosomal subunit protein uL11.